The following is an 881-amino-acid chain: DNA replication helicase (881 aa).

The segment at 1–26 (MAASGGEGSRDVRAPGPPPQQPGARP) is disordered. 96–103 (GNAGSGKS) contributes to the ATP binding site.

It belongs to the herpesviridae helicase family. In terms of assembly, associates with the primase and the primase-associated factor to form the helicase-primase complex.

The protein resides in the host nucleus. Its function is as follows. Component of the helicase/primase complex. Unwinds the DNA at the replication forks and generates single-stranded DNA for both leading and lagging strand synthesis. The primase synthesizes short RNA primers on the lagging strand that the polymerase elongates using dNTPs. Possesses helicase-like motifs and therefore may act as the helicase subunit of the complex. The polypeptide is DNA replication helicase (Human herpesvirus 2 (strain HG52) (HHV-2)).